A 156-amino-acid polypeptide reads, in one-letter code: Small ribosomal subunit protein uS7 (156 aa).

This sequence belongs to the universal ribosomal protein uS7 family. In terms of assembly, part of the 30S ribosomal subunit. Contacts proteins S9 and S11.

Its function is as follows. One of the primary rRNA binding proteins, it binds directly to 16S rRNA where it nucleates assembly of the head domain of the 30S subunit. Is located at the subunit interface close to the decoding center, probably blocks exit of the E-site tRNA. The chain is Small ribosomal subunit protein uS7 from Mycobacterium avium (strain 104).